Consider the following 187-residue polypeptide: 1,6-anhydro-N-acetylmuramyl-L-alanine amidase AmpD (187 aa).

In terms of domain architecture, N-acetylmuramoyl-L-alanine amidase spans 29–167 (SLLVVHNISL…APDRKTDPGP (139 aa)). Position 34 (histidine 34) interacts with Zn(2+). Glutamate 116 acts as the Proton acceptor in catalysis. The Zn(2+) site is built by histidine 154 and aspartate 164.

It belongs to the N-acetylmuramoyl-L-alanine amidase 2 family. Zn(2+) serves as cofactor.

It is found in the cytoplasm. The catalysed reaction is Hydrolyzes the link between N-acetylmuramoyl residues and L-amino acid residues in certain cell-wall glycopeptides.. Involved in cell wall peptidoglycan recycling. Specifically cleaves the amide bond between the lactyl group of N-acetylmuramic acid and the alpha-amino group of the L-alanine in degradation products containing an anhydro N-acetylmuramyl moiety. The chain is 1,6-anhydro-N-acetylmuramyl-L-alanine amidase AmpD (ampD) from Salmonella typhimurium (strain SL1344).